Here is a 116-residue protein sequence, read N- to C-terminus: Non-specific lipid-transfer protein C, cotyledon-specific isoform (116 aa).

The signal sequence occupies residues 1–24 (MKNVVFSVLLLLSFLFCLANTNEA). Disulfide bonds link C28–C76, C38–C53, C54–C98, and C74–C112.

Belongs to the plant LTP family.

Functionally, plant non-specific lipid-transfer proteins transfer phospholipids as well as galactolipids across membranes. May play a role in wax or cutin deposition in the cell walls of expanding epidermal cells and certain secretory tissues. In Ricinus communis (Castor bean), this protein is Non-specific lipid-transfer protein C, cotyledon-specific isoform.